The primary structure comprises 251 residues: Hydroxyacylglutathione hydrolase (251 aa).

The Zn(2+) site is built by His-53, His-55, Asp-57, His-58, His-110, Asp-127, and His-165.

This sequence belongs to the metallo-beta-lactamase superfamily. Glyoxalase II family. Monomer. Requires Zn(2+) as cofactor.

The catalysed reaction is an S-(2-hydroxyacyl)glutathione + H2O = a 2-hydroxy carboxylate + glutathione + H(+). Its pathway is secondary metabolite metabolism; methylglyoxal degradation; (R)-lactate from methylglyoxal: step 2/2. Its function is as follows. Thiolesterase that catalyzes the hydrolysis of S-D-lactoyl-glutathione to form glutathione and D-lactic acid. The protein is Hydroxyacylglutathione hydrolase of Escherichia coli O17:K52:H18 (strain UMN026 / ExPEC).